The following is a 235-amino-acid chain: MKLTWYGHSAFRIETGDAKILIDPYLIGNPSWTGGWEGPAEGITHVLLTHGHSDHISGALEVLGKSGAQLVANFEICMYLVGKGADGSKINPGNIGGTVDCGGFTTTFVQALHSSSFGEDGGKNVYLGNPGGLVLHFPEDRTLYHMGDTDIFSDMALINELHEPKIGIVPIGDRFTMGGAVAALACRRFFKFDTVVPCHFGTFPMIDPTPEKFEAGLEGSGVKVALPKIGETITI.

Belongs to the UPF0173 family.

This chain is UPF0173 metal-dependent hydrolase mll0680, found in Mesorhizobium japonicum (strain LMG 29417 / CECT 9101 / MAFF 303099) (Mesorhizobium loti (strain MAFF 303099)).